A 557-amino-acid chain; its full sequence is Probable WRKY transcription factor 20 (557 aa).

Residues 1 to 12 (MNPQANDRKEFQ) show a composition bias toward basic and acidic residues. 2 disordered regions span residues 1-36 (MNPQ…GGGA) and 76-215 (KPEP…DGYN). Residues 95–114 (SASSSSYTGRGFHQNTFTEQ) show a composition bias toward polar residues. Residues 151-169 (SSHSPSSISDAAGSSSELS) show a composition bias toward low complexity. A compositionally biased stretch (polar residues) spans 193–207 (SIQTSQNDSRGSTPS). The segment at residues 205–269 (TPSILADDGY…YKGTHDHPKP (65 aa)) is a DNA-binding region (WRKY 1). 4 residues coordinate Zn(2+): C236, C241, H264, and H266. Residues 257–348 (DIIYKGTHDH…PDDDDPFSKR (92 aa)) form a disordered region. A compositionally biased stretch (basic and acidic residues) spans 282 to 299 (QEERLDKYPSSTGRDEKG). Residues 303 to 314 (YNLSNPNEQTGN) are compositionally biased toward polar residues. The span at 321 to 332 (SASDDGGEAAAS) shows a compositional bias: low complexity. Positions 375–440 (SEVDILDDGY…YEGKHDHDVP (66 aa)) form a DNA-binding region, WRKY 2. Positions 406, 411, 435, and 437 each coordinate Zn(2+). Disordered regions lie at residues 433 to 486 (GKHD…QHQN) and 520 to 557 (NQYG…QSGP). Over residues 520–536 (NQYGQRETKNETQNGDI) the composition is skewed to polar residues.

The protein belongs to the WRKY group I family.

The protein localises to the nucleus. Its function is as follows. Transcription factor. Interacts specifically with the W box (5'-(T)TGAC[CT]-3'), a frequently occurring elicitor-responsive cis-acting element. The sequence is that of Probable WRKY transcription factor 20 (WRKY20) from Arabidopsis thaliana (Mouse-ear cress).